The sequence spans 51 residues: Large ribosomal subunit protein bL33 (51 aa).

This sequence belongs to the bacterial ribosomal protein bL33 family.

This chain is Large ribosomal subunit protein bL33, found in Psychrobacter sp. (strain PRwf-1).